A 279-amino-acid chain; its full sequence is Urease accessory protein UreD (279 aa).

It belongs to the UreD family. UreD, UreF and UreG form a complex that acts as a GTP-hydrolysis-dependent molecular chaperone, activating the urease apoprotein by helping to assemble the nickel containing metallocenter of UreC. The UreE protein probably delivers the nickel.

It is found in the cytoplasm. In terms of biological role, required for maturation of urease via the functional incorporation of the urease nickel metallocenter. The sequence is that of Urease accessory protein UreD from Rhodopseudomonas palustris (strain ATCC BAA-98 / CGA009).